The primary structure comprises 188 residues: V-type proton ATPase subunit E (188 aa).

It belongs to the V-ATPase E subunit family.

Its function is as follows. Produces ATP from ADP in the presence of a proton gradient across the membrane. The sequence is that of V-type proton ATPase subunit E from Dictyoglomus turgidum (strain DSM 6724 / Z-1310).